The primary structure comprises 414 residues: Putative F-box/kelch-repeat protein At1g20940 (414 aa).

The F-box domain maps to 13–65 (SSIINDLPLDLLDEILFRLEPKSMAMMRCTNNSIKSYLSDPRFGPEYPSWVRP). Kelch repeat units follow at residues 281-328 (LTLI…MYDG) and 331-378 (LVVR…KLTP).

Interacts with DEK3.

Its pathway is protein modification; protein ubiquitination. Probable component of an E3 ubiquitin ligase complex. This is Putative F-box/kelch-repeat protein At1g20940 from Arabidopsis thaliana (Mouse-ear cress).